Here is a 416-residue protein sequence, read N- to C-terminus: Choline/ethanolaminephosphotransferase 1 (416 aa).

The disordered stretch occupies residues 1-20 (MSGHRSTRKRCGDSHPESPV). Ser18 is modified (phosphoserine). Thr40 is subject to Phosphothreonine. Asn86 is a binding site for CDP-choline. Transmembrane regions (helical) follow at residues 89-108 (TIIG…FYCP) and 116-133 (LWAY…QSLD). Asp133 is a Mg(2+) binding site. A glycan (N-linked (GlcNAc...) asparagine) is linked at Asn144. Residue Glu151 coordinates CDP-choline. Asp154 lines the Mg(2+) pocket. Catalysis depends on His155, which acts as the Proton acceptor. The next 8 membrane-spanning stretches (helical) occupy residues 156 to 176 (GCDS…VQLG), 180 to 199 (DWMF…AHWQ), 210 to 230 (IIDV…AVIG), 246 to 267 (MKLF…NYFR), 286 to 306 (VLSP…IYKK), 315 to 334 (HPCL…TNKL), 349 to 363 (TAFI…DQYF), and 368 to 388 (DEYI…IRYC). A Mg(2+)-binding site is contributed by Asp158.

It belongs to the CDP-alcohol phosphatidyltransferase class-I family. As to quaternary structure, homodimer. Mg(2+) is required as a cofactor. It depends on Mn(2+) as a cofactor.

It localises to the endoplasmic reticulum membrane. The protein resides in the nucleus membrane. It catalyses the reaction CDP-ethanolamine + a 1,2-diacyl-sn-glycerol = a 1,2-diacyl-sn-glycero-3-phosphoethanolamine + CMP + H(+). It carries out the reaction CDP-choline + a 1,2-diacyl-sn-glycerol = a 1,2-diacyl-sn-glycero-3-phosphocholine + CMP + H(+). The enzyme catalyses 1-O-alkyl-2-acyl-sn-glycerol + CDP-choline = a 1-O-alkyl-2-acyl-sn-glycero-3-phosphocholine + CMP + H(+). The catalysed reaction is a 1-O-(1Z-alkenyl)-2-acyl-sn-glycerol + CDP-choline = a 1-O-(1Z-alkenyl)-2-acyl-sn-glycero-3-phosphocholine + CMP + H(+). It catalyses the reaction 1,2-dioctanoyl-sn-glycerol + CDP-choline = 1,2-dioctanoyl-sn-glycero-3-phosphocholine + CMP + H(+). It carries out the reaction 1,2-didecanoyl-sn-glycerol + CDP-choline = 1,2-didecanoyl-sn-glycero-3-phosphocholine + CMP + H(+). The enzyme catalyses CDP-choline + 1,2-di-(9Z-octadecenoyl)-sn-glycerol = 1,2-di-(9Z-octadecenoyl)-sn-glycero-3-phosphocholine + CMP + H(+). The catalysed reaction is 1-hexadecanoyl-2-(9Z-octadecenoyl)-sn-glycerol + CDP-choline = 1-hexadecanoyl-2-(9Z-octadecenoyl)-sn-glycero-3-phosphocholine + CMP + H(+). It catalyses the reaction CDP-ethanolamine + 1,2-di-(9Z-octadecenoyl)-sn-glycerol = 1,2-di-(9Z-octadecenoyl)-sn-glycero-3-phosphoethanolamine + CMP + H(+). It carries out the reaction 1-hexadecanoyl-2-(9Z-octadecenoyl)-sn-glycerol + CDP-ethanolamine = 1-hexadecanoyl-2-(9Z-octadecenoyl)-sn-glycero-3-phosphoethanolamine + CMP + H(+). The enzyme catalyses 1-hexadecanoyl-2-(4Z,7Z,10Z,13Z,16Z,19Z-docosahexaenoyl)-sn-glycerol + CDP-choline = 1-hexadecanoyl-2-(4Z,7Z,10Z,13Z,16Z,19Z-docosahexaenoyl)-sn-glycero-3-phosphocholine + CMP + H(+). The catalysed reaction is 1,2-di-(9Z-hexadecenoyl)-sn-glycerol + CDP-choline = 1,2-di-(9Z-hexadecenoyl)-sn-glycero-3-phosphocholine + CMP + H(+). It catalyses the reaction 1,2-di-(9Z-hexadecenoyl)-sn-glycerol + CDP-ethanolamine = 1,2-di-(9Z-hexadecenoyl)-sn-glycero-3-phosphoethanolamine + CMP + H(+). It carries out the reaction 1-O-hexadecyl-2-acetyl-sn-glycerol + CDP-choline = 1-O-hexadecyl-2-acetyl-sn-glycero-3-phosphocholine + CMP + H(+). The enzyme catalyses 1-O-hexadecyl-2-(5Z,8Z,11Z,14Z-eicosatetraenoyl)-sn-glycerol + CDP-choline = 1-O-hexadecyl-2-(5Z,8Z,11Z,14Z)-eicosatetraenoyl-sn-glycero-3-phosphocholine + CMP + H(+). The protein operates within phospholipid metabolism; phosphatidylethanolamine biosynthesis; phosphatidylethanolamine from ethanolamine: step 3/3. It participates in phospholipid metabolism; phosphatidylcholine biosynthesis; phosphatidylcholine from phosphocholine: step 2/2. Catalyzes both phosphatidylcholine and phosphatidylethanolamine biosynthesis from CDP-choline and CDP-ethanolamine, respectively. Involved in protein-dependent process of phospholipid transport to distribute phosphatidyl choline to the lumenal surface. Has a higher cholinephosphotransferase activity than ethanolaminephosphotransferase activity. This is Choline/ethanolaminephosphotransferase 1 from Rattus norvegicus (Rat).